Reading from the N-terminus, the 633-residue chain is MNNVLNSGRTTICDAYNVVAHDPFSFEHKSLDTIQKEWMEWKRTDHSLYVAPVVGTVSSFLLKKVGSLIGKRILSELWGIIFPSGSTNLMQDILRETEQFLNQRLNTDTLARVNAELIGLQANIREFNQQVDNFLNPTQNPVPLSITSSVNTMQQLFLNRLPQFQIQGYQLLLLPLFAQAANMHLSFIRDVILNADEWGISAATLRTYRDYLRNYTRDYSNYCINTYQTAFRGLNTRLHDMLEFRTYMFLNVFEYVSIWSLFKYQSLMVSSGANLYASGSGPQQTQSFTAQNWPFLYSLFQVNSNYILSGISGTRLSITFPNIGGLPGSTTTHSLNSARVNYSGGVSSGLIGATNLNHNFNCSTVLPPLSTPFVRSWLDSGTDREGVATSTNWQTESFQTTLSLRCGAFSARGNSNYFPDYFIRNISGVPLVIRNEDLTRPLHYNQIRNIESPSGTPGGARAYLVSVHNRKNNIYAANENGTMIHLAPEDYTGFTISPIHATQVNNQTRTFISEKFGNQGDSLRFEQSNTTARYTLRGNGNSYNLYLRVSSIGNSTIRVTINGRVYTVSNVNTTTNNDGVNDNGARFSDINIGNIVASDNTNVTLDINVTLNSGTPFDLMNIMFVPTNLPPLY.

Belongs to the delta endotoxin family.

Functionally, promotes colloidosmotic lysis by binding to the midgut epithelial cells of both dipteran (Aedes aegypti) and lepidopteran (Manduca sexta) larvae. The sequence is that of Pesticidal crystal protein Cry2Aa (cry2Aa) from Bacillus thuringiensis subsp. kurstaki.